The following is a 335-amino-acid chain: NADH-quinone oxidoreductase subunit H (335 aa).

Transmembrane regions (helical) follow at residues 12–32 (IIAV…GALL), 81–101 (VIFT…FAVI), 114–134 (IGLL…LFAG), 154–174 (VSYE…VGSF), 187–207 (LWFI…GVAV), 238–258 (FFVG…TLFF), 270–290 (SLAF…FILL), and 307–327 (WKFC…IVLL).

It belongs to the complex I subunit 1 family. As to quaternary structure, NDH-1 is composed of 13 different subunits. Subunits NuoA, H, J, K, L, M, N constitute the membrane sector of the complex.

It is found in the cell inner membrane. The enzyme catalyses a quinone + NADH + 5 H(+)(in) = a quinol + NAD(+) + 4 H(+)(out). NDH-1 shuttles electrons from NADH, via FMN and iron-sulfur (Fe-S) centers, to quinones in the respiratory chain. The immediate electron acceptor for the enzyme in this species is believed to be ubiquinone. Couples the redox reaction to proton translocation (for every two electrons transferred, four hydrogen ions are translocated across the cytoplasmic membrane), and thus conserves the redox energy in a proton gradient. This subunit may bind ubiquinone. The polypeptide is NADH-quinone oxidoreductase subunit H (Pseudomonas syringae pv. tomato (strain ATCC BAA-871 / DC3000)).